Consider the following 248-residue polypeptide: Ubiquinone biosynthesis O-methyltransferase (248 aa).

S-adenosyl-L-methionine-binding residues include Arg40, Gly71, Asp92, and Met135.

The protein belongs to the methyltransferase superfamily. UbiG/COQ3 family.

It catalyses the reaction a 3-demethylubiquinol + S-adenosyl-L-methionine = a ubiquinol + S-adenosyl-L-homocysteine + H(+). The enzyme catalyses a 3-(all-trans-polyprenyl)benzene-1,2-diol + S-adenosyl-L-methionine = a 2-methoxy-6-(all-trans-polyprenyl)phenol + S-adenosyl-L-homocysteine + H(+). It functions in the pathway cofactor biosynthesis; ubiquinone biosynthesis. Functionally, O-methyltransferase that catalyzes the 2 O-methylation steps in the ubiquinone biosynthetic pathway. The protein is Ubiquinone biosynthesis O-methyltransferase of Dinoroseobacter shibae (strain DSM 16493 / NCIMB 14021 / DFL 12).